A 290-amino-acid chain; its full sequence is 4-hydroxy-tetrahydrodipicolinate synthase (290 aa).

A pyruvate-binding site is contributed by Thr44. Residue Tyr132 is the Proton donor/acceptor of the active site. The active-site Schiff-base intermediate with substrate is Lys160. Ile202 serves as a coordination point for pyruvate.

Belongs to the DapA family. In terms of assembly, homotetramer; dimer of dimers.

The protein localises to the cytoplasm. It carries out the reaction L-aspartate 4-semialdehyde + pyruvate = (2S,4S)-4-hydroxy-2,3,4,5-tetrahydrodipicolinate + H2O + H(+). Its pathway is amino-acid biosynthesis; L-lysine biosynthesis via DAP pathway; (S)-tetrahydrodipicolinate from L-aspartate: step 3/4. Functionally, catalyzes the condensation of (S)-aspartate-beta-semialdehyde [(S)-ASA] and pyruvate to 4-hydroxy-tetrahydrodipicolinate (HTPA). This chain is 4-hydroxy-tetrahydrodipicolinate synthase, found in Geotalea daltonii (strain DSM 22248 / JCM 15807 / FRC-32) (Geobacter daltonii).